Consider the following 61-residue polypeptide: Large ribosomal subunit protein bL32 (61 aa).

It belongs to the bacterial ribosomal protein bL32 family.

The protein is Large ribosomal subunit protein bL32 of Cytophaga hutchinsonii (strain ATCC 33406 / DSM 1761 / CIP 103989 / NBRC 15051 / NCIMB 9469 / D465).